The sequence spans 154 residues: Myoglobin (154 aa).

Residues 2 to 148 (GLSDGEWQLV…FRNDIAAKYK (147 aa)) enclose the Globin domain. Serine 4 is subject to Phosphoserine. Histidine 65 lines the nitrite pocket. Histidine 65 is an O2 binding site. Threonine 68 bears the Phosphothreonine mark. Histidine 94 lines the heme b pocket.

It belongs to the globin family. Monomeric.

The protein localises to the cytoplasm. It localises to the sarcoplasm. The enzyme catalyses Fe(III)-heme b-[protein] + nitric oxide + H2O = Fe(II)-heme b-[protein] + nitrite + 2 H(+). It carries out the reaction H2O2 + AH2 = A + 2 H2O. Monomeric heme protein which primary function is to store oxygen and facilitate its diffusion within muscle tissues. Reversibly binds oxygen through a pentacoordinated heme iron and enables its timely and efficient release as needed during periods of heightened demand. Depending on the oxidative conditions of tissues and cells, and in addition to its ability to bind oxygen, it also has a nitrite reductase activity whereby it regulates the production of bioactive nitric oxide. Under stress conditions, like hypoxia and anoxia, it also protects cells against reactive oxygen species thanks to its pseudoperoxidase activity. The polypeptide is Myoglobin (MB) (Sciurus vulgaris (Eurasian red squirrel)).